The chain runs to 445 residues: Gamma-glutamyl phosphate reductase (445 aa).

Belongs to the gamma-glutamyl phosphate reductase family.

It localises to the cytoplasm. The catalysed reaction is L-glutamate 5-semialdehyde + phosphate + NADP(+) = L-glutamyl 5-phosphate + NADPH + H(+). It participates in amino-acid biosynthesis; L-proline biosynthesis; L-glutamate 5-semialdehyde from L-glutamate: step 2/2. Functionally, catalyzes the NADPH-dependent reduction of L-glutamate 5-phosphate into L-glutamate 5-semialdehyde and phosphate. The product spontaneously undergoes cyclization to form 1-pyrroline-5-carboxylate. In Synechococcus sp. (strain RCC307), this protein is Gamma-glutamyl phosphate reductase.